A 174-amino-acid chain; its full sequence is Streptothricin acetyltransferase (174 aa).

An N-acetyltransferase domain is found at 20–170; it reads FIVREVFDVH…AMYWYWFSGA (151 aa).

Belongs to the acetyltransferase family. GNAT subfamily.

The enzyme catalyses streptothricin F + acetyl-CoA = N(beta)-acetylstreptothricin F + CoA + H(+). In terms of biological role, involved in resistance to streptothricin, a broad-spectrum antibiotic produced by streptomycetes. Detoxifies streptothricin via acetylation of the beta amino group of the first beta-lysyl moiety of streptothricin. In Escherichia coli, this protein is Streptothricin acetyltransferase (sat-1).